A 291-amino-acid chain; its full sequence is Acetylglutamate kinase (291 aa).

Residues 65 to 66 (GG), Arg87, and Asn186 contribute to the substrate site.

It belongs to the acetylglutamate kinase family. ArgB subfamily.

It is found in the cytoplasm. The enzyme catalyses N-acetyl-L-glutamate + ATP = N-acetyl-L-glutamyl 5-phosphate + ADP. It participates in amino-acid biosynthesis; L-arginine biosynthesis; N(2)-acetyl-L-ornithine from L-glutamate: step 2/4. In terms of biological role, catalyzes the ATP-dependent phosphorylation of N-acetyl-L-glutamate. The protein is Acetylglutamate kinase of Mycolicibacterium vanbaalenii (strain DSM 7251 / JCM 13017 / BCRC 16820 / KCTC 9966 / NRRL B-24157 / PYR-1) (Mycobacterium vanbaalenii).